Consider the following 356-residue polypeptide: Thrombomodulin (356 aa).

The Extracellular portion of the chain corresponds to 1-296 (RGARGETEGR…SPAPAGPLHS (296 aa)). 2 EGF-like domains span residues 17–57 (GAWA…RSCG) and 60–98 (AEHP…HRCE). 18 cysteine pairs are disulfide-bonded: cysteine 21/cysteine 32, cysteine 28/cysteine 41, cysteine 43/cysteine 56, cysteine 64/cysteine 72, cysteine 68/cysteine 82, cysteine 84/cysteine 97, cysteine 103/cysteine 114, cysteine 110/cysteine 123, cysteine 125/cysteine 136, cysteine 143/cysteine 152, cysteine 148/cysteine 162, cysteine 164/cysteine 178, cysteine 182/cysteine 191, cysteine 187/cysteine 199, cysteine 201/cysteine 213, cysteine 219/cysteine 228, cysteine 224/cysteine 237, and cysteine 239/cysteine 253. In terms of domain architecture, EGF-like 3; calcium-binding spans 99 to 137 (DVDDCAQLPSPCPQRCVNTEGGFQCHCDTGYELVDGECV). EGF-like domains follow at residues 139–179 (PVDP…HKCQ) and 178–214 (CQMF…STCT). The EGF-like 6; calcium-binding domain maps to 215–254 (DINECDTNICPGQCHNLPGTYECICGPDSALSGQIGIDCD). Residues 255–290 (PTQVNEERGTPEDYGGSGEPPVSPTPGATARPSPAP) form a disordered region. An O-linked (Xyl...) (chondroitin sulfate) serine glycan is attached at serine 271. A helical membrane pass occupies residues 297-320 (GVLVGISIASLSLVVALLALLCHL). Over 321–356 (RKKQGASRGELEYKCGVPAKELMLQQVKTERTPQKL) the chain is Cytoplasmic.

As to quaternary structure, interacts with ITGAL, ITGAM and ITGB2. Interacts with thrombin/F2; this interaction switches the specificity of thrombin from a procoagulant to an anticoagulant and antifibrinolytic protease. Interacts with ANGP1 and ANGP2; these interactions significantly inhibit the generation of activated PC and TAFIa/CPB2 by the thrombin/thrombomodulin complex. Interacts with PF4; this interaction enhances generation of activated protein C. Interacts with HMGB1; this interaction inhibits HMGB1 inflammatory activity. Endothelial cells are unique in synthesizing thrombomodulin.

Its subcellular location is the membrane. Endothelial cell receptor that plays a critical role in regulating several physiological processes including hemostasis, coagulation, fibrinolysis, inflammation, and angiogenesis. Acts as a cofactor for thrombin activation of protein C/PROC on the surface of vascular endothelial cells leading to initiation of the activated protein C anticoagulant pathway. Also accelerates the activation of the plasma carboxypeptidase B2/CPB2, which catalyzes removal of C-terminal basic amino acids from its substrates including kinins or anaphylatoxins leading to fibrinolysis inhibition. Plays critical protective roles in changing the cleavage specificity of protease-activated receptor 1/PAR1, inhibiting endothelial cell permeability and inflammation. Suppresses inflammation distinctly from its anticoagulant cofactor activity by sequestering HMGB1 thereby preventing it from engaging cellular receptors such as RAGE and contributing to the inflammatory response. The protein is Thrombomodulin (THBD) of Bos taurus (Bovine).